Here is a 468-residue protein sequence, read N- to C-terminus: Na(+)/H(+) antiporter (468 aa).

8 helical membrane passes run 12–32 (HLALIVAGGFITFFCYFSEVF), 36–56 (LLVGEAVLGSITGLIFGPHAA), 81–96 (DVRVFASAIELPGAYF), 103–123 (IIVMLLPVMAYGWLVTAGFAY), 133–153 (GSLLIAGCITSTDPVLSALIV), 169–189 (LLIAESGCNDGMAVPFFYFAI), 204–224 (WVLLVVLYECAFGIFFGCVIG), and 258–278 (GIGTIIGVDDLLMSFFAGILF). Asparagine 287 is a glycosylation site (N-linked (GlcNAc...) asparagine). The helical transmembrane segment at 293-313 (VPAFIDQTFSLLFFTYYGTII) threads the bilayer. A glycan (N-linked (GlcNAc...) asparagine) is linked at asparagine 319. A run of 3 helical transmembrane segments spans residues 320–340 (WSVEGLPVWRLIVFSILTLVC), 362–382 (ALFVGHFGPIGVCAVYMAFLA), and 408–428 (IIWPIISFVILSSIIVHGFSI). Serine 449 and serine 451 each carry phosphoserine.

The protein belongs to the fungal Na(+)/H(+) exchanger family.

It localises to the cell membrane. Its function is as follows. Sodium export from cell, takes up external protons in exchange for internal sodium ions. Involved in regulation of pH. The polypeptide is Na(+)/H(+) antiporter (Schizosaccharomyces pombe (strain 972 / ATCC 24843) (Fission yeast)).